We begin with the raw amino-acid sequence, 733 residues long: Sulfate transporter (733 aa).

The segment covering 1-18 (MSLKNEEQNDLSPKDSVK) has biased composition (basic and acidic residues). A disordered region spans residues 1–37 (MSLKNEEQNDLSPKDSVKGNDQYRAPSGIHLEREEES). Ser-12 and Ser-16 each carry phosphoserine. 2 consecutive transmembrane segments (helical) span residues 113–133 (VMSG…YSLL) and 138–158 (PIYG…LGTS). N-linked (GlcNAc...) asparagine glycosylation is present at Asn-194. The next 6 membrane-spanning stretches (helical) occupy residues 214-234 (IIVG…MGFF), 237-257 (GFVS…GASF), 379-399 (IDAI…SEMF), 415-435 (AIGF…SAAL), 453-473 (VMTA…FFSL), and 519-539 (LIST…CVIL). One can recognise an STAS domain in the interval 563-714 (AYKNLQAKSG…SVYEAMTFAE (152 aa)).

Belongs to the SLC26A/SulP transporter (TC 2.A.53) family. N-glycosylated.

The protein resides in the cell membrane. It localises to the apical cell membrane. The catalysed reaction is oxalate(in) + sulfate(out) = oxalate(out) + sulfate(in). The enzyme catalyses sulfate(out) + 2 chloride(in) = sulfate(in) + 2 chloride(out). It catalyses the reaction oxalate(out) + 2 chloride(in) = oxalate(in) + 2 chloride(out). It carries out the reaction bromide(in) + chloride(out) = bromide(out) + chloride(in). The catalysed reaction is nitrate(in) + chloride(out) = nitrate(out) + chloride(in). The enzyme catalyses iodide(in) + chloride(out) = iodide(out) + chloride(in). Functionally, sulfate transporter which mediates sulfate uptake into chondrocytes in order to maintain adequate sulfation of proteoglycans which is needed for cartilage development. Mediates electroneutral anion exchange of sulfate ions for oxalate ions, sulfate and oxalate ions for chloride and/or hydroxyl ions and chloride ions for bromide, iodide and nitrate ions. The coupling of sulfate transport to both hydroxyl and chloride ions likely serves to ensure transport at both acidic pH when most sulfate uptake is mediated by sulfate-hydroxide exchange and alkaline pH when most sulfate uptake is mediated by sulfate-chloride exchange. Essential for chondrocyte proliferation, differentiation and cell size expansion. This Bubalus bubalis (Domestic water buffalo) protein is Sulfate transporter (SLC26A2).